The sequence spans 453 residues: Serine/threonine-protein phosphatase 2A 55 kDa regulatory subunit B delta isoform (453 aa).

WD repeat units lie at residues 32–71 (AEADIISTVEFNYSGDLLATGDKGGRVVIFQREQENKGRA), 97–138 (EIEE…KRAE), 181–219 (AHTYHINSISVNSDHETYLSADDLRINLWHLEITDRSFN), and 230–270 (ELTE…LCDR). Position 285 is a phosphoserine (S285). 3 WD repeats span residues 289-327 (EIISSISDVKFSHSGRYMMTRDYLSVKVWDLNMEGRPVE), 344-385 (ENDC…DVTL), and 420-452 (DFNKKILHTAWHPMESIIAVAATNNLYIFQDKI). A Phosphotyrosine modification is found at Y305. Position 308 is a phosphothreonine (T308). Residues 385–406 (LEASRENSKPRASLKPRKVCSG) form a disordered region.

This sequence belongs to the phosphatase 2A regulatory subunit B family. PP2A consists of a common heterodimeric core enzyme, composed of a 36 kDa catalytic subunit (subunit C) and a 65 kDa constant regulatory subunit (PR65 or subunit A), that associates with a variety of regulatory subunits. Proteins that associate with the core dimer include three families of regulatory subunits B (the R2/B/PR55/B55, R3/B''/PR72/PR130/PR59 and R5/B'/B56 families), the 48 kDa variable regulatory subunit, viral proteins, and cell signaling molecules. Interacts with ENSA (when phosphorylated at 'Ser-67') and ARPP19 (when phosphorylated at 'Ser-62'), leading to inhibit PP2A activity. Interacts with IER5. Widely expressed with high levels in brain, heart, placenta, skeletal muscle, testis, thymus and spleen.

It is found in the cytoplasm. Substrate-recognition subunit of protein phosphatase 2A (PP2A) that plays a key role in cell cycle by controlling mitosis entry and exit. Involved in chromosome clustering during late mitosis by mediating dephosphorylation of MKI67. The activity of PP2A complexes containing PPP2R2D (PR55-delta) fluctuate during the cell cycle: the activity is high in interphase and low in mitosis. The protein is Serine/threonine-protein phosphatase 2A 55 kDa regulatory subunit B delta isoform (Ppp2r2d) of Rattus norvegicus (Rat).